A 65-amino-acid polypeptide reads, in one-letter code: RSGKLDAFLVLEQLRCNGVLEGIRICRQGFPNRIVFQEFRQRYEILAANAIPKLRNWQWWRLFTK.

Residues 1-65 enclose the Myosin motor domain; that stretch reads RSGKLDAFLV…NWQWWRLFTK (65 aa).

It belongs to the TRAFAC class myosin-kinesin ATPase superfamily. Myosin family. Muscle myosin is a hexameric protein that consists of 2 heavy chain subunits (MHC), 2 alkali light chain subunits (MLC) and 2 regulatory light chain subunits (MLC-2).

It is found in the melanosome. Its subcellular location is the cytoplasm. It localises to the myofibril. In terms of biological role, muscle contraction. The sequence is that of Myosin-11 (MYH11) from Sus scrofa (Pig).